We begin with the raw amino-acid sequence, 185 residues long: Large ribosomal subunit protein uL15 (185 aa).

The interval Met-1 to Gly-51 is disordered. Residues Arg-21 to Asn-35 show a composition bias toward gly residues.

This sequence belongs to the universal ribosomal protein uL15 family. In terms of assembly, part of the 50S ribosomal subunit.

Binds to the 23S rRNA. The protein is Large ribosomal subunit protein uL15 of Chlorobium phaeobacteroides (strain DSM 266 / SMG 266 / 2430).